Consider the following 430-residue polypeptide: 3-phosphoshikimate 1-carboxyvinyltransferase (430 aa).

The 3-phosphoshikimate site is built by K21, S22, and R26. K21 contacts phosphoenolpyruvate. Positions 94 and 122 each coordinate phosphoenolpyruvate. 3-phosphoshikimate-binding residues include S168, Q170, D315, and K342. Residue Q170 coordinates phosphoenolpyruvate. The active-site Proton acceptor is D315. Residues R346 and R389 each coordinate phosphoenolpyruvate.

Belongs to the EPSP synthase family. In terms of assembly, monomer.

Its subcellular location is the cytoplasm. It carries out the reaction 3-phosphoshikimate + phosphoenolpyruvate = 5-O-(1-carboxyvinyl)-3-phosphoshikimate + phosphate. The protein operates within metabolic intermediate biosynthesis; chorismate biosynthesis; chorismate from D-erythrose 4-phosphate and phosphoenolpyruvate: step 6/7. Its function is as follows. Catalyzes the transfer of the enolpyruvyl moiety of phosphoenolpyruvate (PEP) to the 5-hydroxyl of shikimate-3-phosphate (S3P) to produce enolpyruvyl shikimate-3-phosphate and inorganic phosphate. This is 3-phosphoshikimate 1-carboxyvinyltransferase from Salinibacter ruber (strain DSM 13855 / M31).